Reading from the N-terminus, the 137-residue chain is Probable glycine cleavage system H protein 1 (137 aa).

Residues 31–113 (VAVIGITDYA…YGEGWIFKLK (83 aa)) enclose the Lipoyl-binding domain. N6-lipoyllysine is present on lysine 72.

This sequence belongs to the GcvH family. As to quaternary structure, the glycine cleavage system is composed of four proteins: P, T, L and H. (R)-lipoate serves as cofactor.

The glycine cleavage system catalyzes the degradation of glycine. The H protein shuttles the methylamine group of glycine from the P protein to the T protein. This is Probable glycine cleavage system H protein 1 from Saccharolobus solfataricus (strain ATCC 35092 / DSM 1617 / JCM 11322 / P2) (Sulfolobus solfataricus).